Reading from the N-terminus, the 180-residue chain is Large ribosomal subunit protein uL5 (180 aa).

The protein belongs to the universal ribosomal protein uL5 family. Part of the 50S ribosomal subunit; part of the 5S rRNA/L5/L18/L25 subcomplex. Contacts the 5S rRNA and the P site tRNA. Forms a bridge to the 30S subunit in the 70S ribosome.

Its function is as follows. This is one of the proteins that bind and probably mediate the attachment of the 5S RNA into the large ribosomal subunit, where it forms part of the central protuberance. In the 70S ribosome it contacts protein S13 of the 30S subunit (bridge B1b), connecting the 2 subunits; this bridge is implicated in subunit movement. Contacts the P site tRNA; the 5S rRNA and some of its associated proteins might help stabilize positioning of ribosome-bound tRNAs. The chain is Large ribosomal subunit protein uL5 from Mesoplasma florum (strain ATCC 33453 / NBRC 100688 / NCTC 11704 / L1) (Acholeplasma florum).